Here is a 227-residue protein sequence, read N- to C-terminus: Phosphoribosylformylglycinamidine synthase subunit PurQ (227 aa).

Residues 2-226 (KFAVIQFPGS…VKAWKEEQVN (225 aa)) enclose the Glutamine amidotransferase type-1 domain. The active-site Nucleophile is the Cys-86. Active-site residues include His-195 and Glu-197.

In terms of assembly, part of the FGAM synthase complex composed of 1 PurL, 1 PurQ and 2 PurS subunits.

Its subcellular location is the cytoplasm. It catalyses the reaction N(2)-formyl-N(1)-(5-phospho-beta-D-ribosyl)glycinamide + L-glutamine + ATP + H2O = 2-formamido-N(1)-(5-O-phospho-beta-D-ribosyl)acetamidine + L-glutamate + ADP + phosphate + H(+). The enzyme catalyses L-glutamine + H2O = L-glutamate + NH4(+). The protein operates within purine metabolism; IMP biosynthesis via de novo pathway; 5-amino-1-(5-phospho-D-ribosyl)imidazole from N(2)-formyl-N(1)-(5-phospho-D-ribosyl)glycinamide: step 1/2. Part of the phosphoribosylformylglycinamidine synthase complex involved in the purines biosynthetic pathway. Catalyzes the ATP-dependent conversion of formylglycinamide ribonucleotide (FGAR) and glutamine to yield formylglycinamidine ribonucleotide (FGAM) and glutamate. The FGAM synthase complex is composed of three subunits. PurQ produces an ammonia molecule by converting glutamine to glutamate. PurL transfers the ammonia molecule to FGAR to form FGAM in an ATP-dependent manner. PurS interacts with PurQ and PurL and is thought to assist in the transfer of the ammonia molecule from PurQ to PurL. The sequence is that of Phosphoribosylformylglycinamidine synthase subunit PurQ from Listeria monocytogenes serotype 4b (strain CLIP80459).